We begin with the raw amino-acid sequence, 197 residues long: MASKGPSYRIENIVATVNLGVELDLEKLAERLTMAEYNPDQFPGLILRLTKPRISALIFRTGKMVCTGAKNEEDLKNAVRALVKLLKDHGADVPFDPEVQIQNIVASGNLFAEVDLEQAVLMLENAMYEPEQFPGLIYRMSSPRVVILIFGSGKIVCTGAKSEKDVATAVQKLYNQLKDLGVLYIEEGEAEEGEEEL.

Tandem repeats lie at residues 10–86 (IENI…VKLL) and 101–177 (IQNI…YNQL).

It belongs to the TBP family.

Functionally, general factor that plays a role in the activation of archaeal genes transcribed by RNA polymerase. Binds specifically to the TATA box promoter element which lies close to the position of transcription initiation. The chain is TATA-box-binding protein from Pyrobaculum neutrophilum (strain DSM 2338 / JCM 9278 / NBRC 100436 / V24Sta) (Thermoproteus neutrophilus).